Consider the following 229-residue polypeptide: Urease accessory protein UreF (229 aa).

It belongs to the UreF family. As to quaternary structure, ureD, UreF and UreG form a complex that acts as a GTP-hydrolysis-dependent molecular chaperone, activating the urease apoprotein by helping to assemble the nickel containing metallocenter of UreC. The UreE protein probably delivers the nickel.

It is found in the cytoplasm. Its function is as follows. Required for maturation of urease via the functional incorporation of the urease nickel metallocenter. This chain is Urease accessory protein UreF, found in Methylobacterium radiotolerans (strain ATCC 27329 / DSM 1819 / JCM 2831 / NBRC 15690 / NCIMB 10815 / 0-1).